The chain runs to 600 residues: ATP-dependent lipid A-core flippase (600 aa).

Helical transmembrane passes span 27–47, 83–103, 174–194, and 267–287; these read ISLFLISIVGFLIFASTQPML, LLIILIAAWQGLGSYLGNYFL, LLFMNWKLTLVMVAILPLIAV, and PLLQLVIYSAMAILMFLVLYL. Positions 31–322 constitute an ABC transmembrane type-1 domain; sequence LISIVGFLIF…LSEVSSTIQK (292 aa). The ABC transporter domain maps to 354–590; the sequence is LDVRNLSFTY…NGYYARLNAM (237 aa). 388–395 provides a ligand contact to ATP; the sequence is GRSGSGKS.

The protein belongs to the ABC transporter superfamily. Lipid exporter (TC 3.A.1.106) family. In terms of assembly, homodimer.

It is found in the cell inner membrane. It catalyses the reaction ATP + H2O + lipid A-core oligosaccharideSide 1 = ADP + phosphate + lipid A-core oligosaccharideSide 2.. In terms of biological role, involved in lipopolysaccharide (LPS) biosynthesis. Translocates lipid A-core from the inner to the outer leaflet of the inner membrane. Transmembrane domains (TMD) form a pore in the inner membrane and the ATP-binding domain (NBD) is responsible for energy generation. In Pseudomonas fluorescens (strain Pf0-1), this protein is ATP-dependent lipid A-core flippase.